The chain runs to 669 residues: DNA ligase (669 aa).

NAD(+) is bound by residues 34 to 38 (DAEYD), 83 to 84 (SL), and glutamate 114. Lysine 116 acts as the N6-AMP-lysine intermediate in catalysis. 4 residues coordinate NAD(+): arginine 137, glutamate 171, lysine 287, and lysine 311. Cysteine 405, cysteine 408, cysteine 423, and cysteine 428 together coordinate Zn(2+). A BRCT domain is found at 591-669 (NVESYFAGKT…EERFLQELNK (79 aa)).

The protein belongs to the NAD-dependent DNA ligase family. LigA subfamily. It depends on Mg(2+) as a cofactor. Mn(2+) is required as a cofactor.

It catalyses the reaction NAD(+) + (deoxyribonucleotide)n-3'-hydroxyl + 5'-phospho-(deoxyribonucleotide)m = (deoxyribonucleotide)n+m + AMP + beta-nicotinamide D-nucleotide.. Its function is as follows. DNA ligase that catalyzes the formation of phosphodiester linkages between 5'-phosphoryl and 3'-hydroxyl groups in double-stranded DNA using NAD as a coenzyme and as the energy source for the reaction. It is essential for DNA replication and repair of damaged DNA. The sequence is that of DNA ligase from Bacillus cereus (strain ZK / E33L).